Consider the following 246-residue polypeptide: Orotidine 5'-phosphate decarboxylase (246 aa).

Residues D22, K44, 71–80 (DLKYHDIPHT), T130, R191, Q201, G221, and R222 each bind substrate. Residue K73 is the Proton donor of the active site.

Belongs to the OMP decarboxylase family. Type 1 subfamily. Homodimer.

It carries out the reaction orotidine 5'-phosphate + H(+) = UMP + CO2. It functions in the pathway pyrimidine metabolism; UMP biosynthesis via de novo pathway; UMP from orotate: step 2/2. Its function is as follows. Catalyzes the decarboxylation of orotidine 5'-monophosphate (OMP) to uridine 5'-monophosphate (UMP). The chain is Orotidine 5'-phosphate decarboxylase from Neisseria meningitidis serogroup A / serotype 4A (strain DSM 15465 / Z2491).